The primary structure comprises 450 residues: 23S rRNA (uracil(1939)-C(5))-methyltransferase RlmD (450 aa).

Residues 12–70 (SKQLSAKLSLNVDQLDHLGAGIAQYQGKVVFIPGALPDETVTVQLTEQKKNYARAKLIK) form the TRAM domain. Positions 83, 89, 92, and 171 each coordinate [4Fe-4S] cluster. The S-adenosyl-L-methionine site is built by Gln283, Phe312, Asn317, Glu333, Asp360, and Asp380. The active-site Nucleophile is the Cys406.

Belongs to the class I-like SAM-binding methyltransferase superfamily. RNA M5U methyltransferase family. RlmD subfamily.

It catalyses the reaction uridine(1939) in 23S rRNA + S-adenosyl-L-methionine = 5-methyluridine(1939) in 23S rRNA + S-adenosyl-L-homocysteine + H(+). Its function is as follows. Catalyzes the formation of 5-methyl-uridine at position 1939 (m5U1939) in 23S rRNA. The polypeptide is 23S rRNA (uracil(1939)-C(5))-methyltransferase RlmD (Shewanella sp. (strain W3-18-1)).